Here is a 231-residue protein sequence, read N- to C-terminus: NADH-ubiquinone oxidoreductase chain 4 (231 aa).

6 helical membrane passes run 1–21 (PIAG…YGII), 34–54 (MFLP…LTCL), 63–85 (IAYS…TPWG), 89–111 (AMTL…NTTY), 128–148 (ILPM…AIPP), and 156–176 (LLIM…LGLS).

This sequence belongs to the complex I subunit 4 family.

It localises to the mitochondrion membrane. The catalysed reaction is a ubiquinone + NADH + 5 H(+)(in) = a ubiquinol + NAD(+) + 4 H(+)(out). Core subunit of the mitochondrial membrane respiratory chain NADH dehydrogenase (Complex I) that is believed to belong to the minimal assembly required for catalysis. Complex I functions in the transfer of electrons from NADH to the respiratory chain. The immediate electron acceptor for the enzyme is believed to be ubiquinone. This chain is NADH-ubiquinone oxidoreductase chain 4 (MT-ND4), found in Gloydius intermedius (Central Asian pit viper).